We begin with the raw amino-acid sequence, 603 residues long: Protein Spindly (603 aa).

An N-acetylmethionine modification is found at M1. A coiled-coil region spans residues 1 to 442 (MESDVIADLR…LKLKYEPEEK (442 aa)). Phosphoserine is present on residues S513 and S553. Residues 542-577 (ALSERSRNTPNSPRLAAESRLQREVKQGKETASKLE) form a disordered region. Basic and acidic residues predominate over residues 561–577 (RLQREVKQGKETASKLE).

Belongs to the Spindly family. In terms of assembly, interacts with KNTC1 and ZW10. These interactions appear weak and may be transient or indirect. Interacts with dynein intermediate chain and dynactin (DCTN1). Interacts with the catalytically active form of USP45. Monoubiquitinated with'Lys-48' linkage. Deubiquitinated by USP45.

It is found in the cytoplasm. The protein localises to the cytoskeleton. The protein resides in the microtubule organizing center. Its subcellular location is the centrosome. It localises to the chromosome. It is found in the centromere. The protein localises to the kinetochore. The protein resides in the nucleus. Its subcellular location is the spindle pole. In terms of biological role, required for the localization of dynein and dynactin to the mitotic kintochore. Dynein is believed to control the initial lateral interaction between the kinetochore and spindle microtubules and to facilitate the subsequent formation of end-on kinetochore-microtubule attachments mediated by the NDC80 complex. Also required for correct spindle orientation. Does not appear to be required for the removal of spindle assembly checkpoint (SAC) proteins from the kinetochore upon bipolar spindle attachment. Acts as an adapter protein linking the dynein motor complex to various cargos and converts dynein from a non-processive to a highly processive motor in the presence of dynactin. Facilitates the interaction between dynein and dynactin and activates dynein processivity (the ability to move along a microtubule for a long distance without falling off the track). Plays a role in cell migration. This Bos taurus (Bovine) protein is Protein Spindly.